The chain runs to 313 residues: Protein phosphatase PTC7 homolog fig (313 aa).

The region spanning 47–307 (KEPLTDLQLR…DDITVILASL (261 aa)) is the PPM-type phosphatase domain. The Mn(2+) site is built by Asp-83, Gly-84, and Asp-229.

The protein belongs to the PP2C family. It depends on Mg(2+) as a cofactor. Mn(2+) is required as a cofactor.

It carries out the reaction O-phospho-L-seryl-[protein] + H2O = L-seryl-[protein] + phosphate. The enzyme catalyses O-phospho-L-threonyl-[protein] + H2O = L-threonyl-[protein] + phosphate. This is Protein phosphatase PTC7 homolog fig from Drosophila virilis (Fruit fly).